A 451-amino-acid polypeptide reads, in one-letter code: tRNA-2-methylthio-N(6)-dimethylallyladenosine synthase (451 aa).

Residues 3-120 (KKLFIQTHGC…LPEMVNAAGK (118 aa)) form the MTTase N-terminal domain. [4Fe-4S] cluster is bound by residues Cys-12, Cys-49, Cys-83, Cys-156, Cys-160, and Cys-163. The region spanning 142–374 (RVEGAEAFVS…QRRISQQAYD (233 aa)) is the Radical SAM core domain. The TRAM domain occupies 377 to 441 (LSMVGEVQRI…PNSLLGELVG (65 aa)).

The protein belongs to the methylthiotransferase family. MiaB subfamily. Monomer. The cofactor is [4Fe-4S] cluster.

Its subcellular location is the cytoplasm. It catalyses the reaction N(6)-dimethylallyladenosine(37) in tRNA + (sulfur carrier)-SH + AH2 + 2 S-adenosyl-L-methionine = 2-methylsulfanyl-N(6)-dimethylallyladenosine(37) in tRNA + (sulfur carrier)-H + 5'-deoxyadenosine + L-methionine + A + S-adenosyl-L-homocysteine + 2 H(+). Its function is as follows. Catalyzes the methylthiolation of N6-(dimethylallyl)adenosine (i(6)A), leading to the formation of 2-methylthio-N6-(dimethylallyl)adenosine (ms(2)i(6)A) at position 37 in tRNAs that read codons beginning with uridine. The sequence is that of tRNA-2-methylthio-N(6)-dimethylallyladenosine synthase from Marinomonas sp. (strain MWYL1).